A 94-amino-acid polypeptide reads, in one-letter code: Large ribosomal subunit protein uL23 (94 aa).

Belongs to the universal ribosomal protein uL23 family. As to quaternary structure, part of the 50S ribosomal subunit. Contacts protein L29, and trigger factor when it is bound to the ribosome.

Its function is as follows. One of the early assembly proteins it binds 23S rRNA. One of the proteins that surrounds the polypeptide exit tunnel on the outside of the ribosome. Forms the main docking site for trigger factor binding to the ribosome. This Pelobacter propionicus (strain DSM 2379 / NBRC 103807 / OttBd1) protein is Large ribosomal subunit protein uL23.